The chain runs to 518 residues: MPHHEFECSKVIPERKKHAVIKGKGETLADALPQGYLNTIPGSISERGCAYCGAKHVIGTPMKDVIHISHGPVGCTYDTWQTKRYISDNDNFQLKYTYATDVKEKHIVFGAEKLLKQNIIEAFKAFPQIKRMTIYQTCATALIGDDINAIAEEVMEEMPEVDIFVCNSPGFAGPSQSGGHHKINIAWINQKVGTVEPEITGDHVINYVGEYNIQGDQEVMVDYFKRMGIQVLSTFTGNGSYDGLRAMHRAHLNVLECARSAEYICNELRVRYGIPRLDIDGFGFKPLADSLRKIGMFFGIEDRAKAIIDEEVARWKPELDWYKERLMGKKVCLWPGGSKLWHWAHVIEEEMGLKVVSVYIKFGHQGDMEKGIARCGEGTLAIDDPNELEGLEALEMLKPDIILTGKRPGEVAKKVRVPYLNAHAYHNGPYKGFEGWVRFARDIYNAIYSPIHQLSGIDITKDNAPEWGNGFRTRQMLSDGNLSDAVRNSETLRQYTGGYDSVSKLREREYPAFERKVG.

[8Fe-7S] cluster-binding residues include C49, C75, and C138. C257 and H423 together coordinate [8Fe-9S-C-homocitryl] cluster.

Belongs to the NifD/NifK/NifE/NifN family. In terms of assembly, hexamer of two alpha, two beta, and two delta chains. [8Fe-7S] cluster serves as cofactor. [8Fe-9S-C-homocitryl] cluster is required as a cofactor.

The enzyme catalyses N2 + 8 reduced [2Fe-2S]-[ferredoxin] + 16 ATP + 16 H2O = H2 + 8 oxidized [2Fe-2S]-[ferredoxin] + 2 NH4(+) + 16 ADP + 16 phosphate + 6 H(+). Its function is as follows. This iron-iron protein is part of the nitrogenase complex that catalyzes the key enzymatic reactions in nitrogen fixation. Other nitrogenase complexes utilize a molybdenum-iron protein or a vanadium-iron protein. In Azotobacter vinelandii, this protein is Nitrogenase iron-iron protein alpha chain (anfD).